Consider the following 305-residue polypeptide: NADH-cytochrome b5 reductase 1 (305 aa).

A helical membrane pass occupies residues 8 to 28 (VLLASLGVGLFTLFGLALGTY). Positions 44–156 (DEKYLLRLLD…RGPSGLLSYA (113 aa)) constitute an FAD-binding FR-type domain. FAD is bound by residues 136–166 (DSLK…IQPN) and 175–210 (VAKK…QCFL).

The protein belongs to the flavoprotein pyridine nucleotide cytochrome reductase family. FAD is required as a cofactor.

It localises to the membrane. It catalyses the reaction 2 Fe(III)-[cytochrome b5] + NADH = 2 Fe(II)-[cytochrome b5] + NAD(+) + H(+). NADH-cytochrome b5 reductases are involved in desaturation and elongation of fatty acids, cholesterol biosynthesis, drug metabolism, and, in erythrocyte, methemoglobin reduction. The sequence is that of NADH-cytochrome b5 reductase 1 (Cyb5r1) from Rattus norvegicus (Rat).